A 97-amino-acid chain; its full sequence is Small ribosomal subunit protein bS20 (97 aa).

It belongs to the bacterial ribosomal protein bS20 family.

Its function is as follows. Binds directly to 16S ribosomal RNA. The polypeptide is Small ribosomal subunit protein bS20 (Gloeothece citriformis (strain PCC 7424) (Cyanothece sp. (strain PCC 7424))).